A 151-amino-acid polypeptide reads, in one-letter code: Small ribosomal subunit protein uS9 (151 aa).

Belongs to the universal ribosomal protein uS9 family.

In Aeropyrum pernix (strain ATCC 700893 / DSM 11879 / JCM 9820 / NBRC 100138 / K1), this protein is Small ribosomal subunit protein uS9 (rps9).